Reading from the N-terminus, the 358-residue chain is Probable protein phosphatase 2C 68 (358 aa).

Residues 74-352 (RHGAASVAGR…DNISVVVVDL (279 aa)) enclose the PPM-type phosphatase domain. The Mn(2+) site is built by Asp-117, Gly-118, Asp-298, and Asp-343.

Belongs to the PP2C family. The cofactor is Mg(2+). Mn(2+) is required as a cofactor.

Its subcellular location is the nucleus. It localises to the cytoplasm. The protein resides in the cytosol. The catalysed reaction is O-phospho-L-seryl-[protein] + H2O = L-seryl-[protein] + phosphate. The enzyme catalyses O-phospho-L-threonyl-[protein] + H2O = L-threonyl-[protein] + phosphate. Its function is as follows. Involved in the regulation of abiotic stress responses. Acts as a negative regulator of abscisic acid (ABA) signaling and positive regulator of abiotic stress signaling. May be involved in panicle development. This is Probable protein phosphatase 2C 68 from Oryza sativa subsp. japonica (Rice).